Reading from the N-terminus, the 168-residue chain is MPRSRINGNFIDKTFTIVADILLRVIPTTSGEKEAFTYYRDGMSAQSEGNYAEALQNYYEAMRLEIDPYDRSYILYNIGLIHTSNGEHTKALEYYFRALERNPFLPQAFNNMAVICHYRGEQAIQQGDSEMAEAWFAQAAEYWKQAITLTPGNYIEAQNWLTITRRFE.

3 TPR repeats span residues A35–P68, S72–L105, and G120–N153.

The protein belongs to the Ycf3 family. As to quaternary structure, interacts with Y3IP1.

The protein resides in the plastid. Its subcellular location is the chloroplast thylakoid membrane. In terms of biological role, essential for the assembly of the photosystem I (PSI) complex. May act as a chaperone-like factor to guide the assembly of the PSI subunits. The protein is Photosystem I assembly protein Ycf3 of Arabidopsis thaliana (Mouse-ear cress).